The sequence spans 270 residues: Putative phosphoenolpyruvate synthase regulatory protein (270 aa).

150–157 (GVSRCGKT) serves as a coordination point for ADP.

This sequence belongs to the pyruvate, phosphate/water dikinase regulatory protein family. PSRP subfamily.

The catalysed reaction is [pyruvate, water dikinase] + ADP = [pyruvate, water dikinase]-phosphate + AMP + H(+). It carries out the reaction [pyruvate, water dikinase]-phosphate + phosphate + H(+) = [pyruvate, water dikinase] + diphosphate. Functionally, bifunctional serine/threonine kinase and phosphorylase involved in the regulation of the phosphoenolpyruvate synthase (PEPS) by catalyzing its phosphorylation/dephosphorylation. The chain is Putative phosphoenolpyruvate synthase regulatory protein from Aeromonas hydrophila subsp. hydrophila (strain ATCC 7966 / DSM 30187 / BCRC 13018 / CCUG 14551 / JCM 1027 / KCTC 2358 / NCIMB 9240 / NCTC 8049).